A 623-amino-acid chain; its full sequence is Chaperone protein DnaK (623 aa).

Threonine 197 bears the Phosphothreonine; by autocatalysis mark. Positions 595-615 (AENMYKKDEPNTANDKKKKDD) are enriched in basic and acidic residues. The disordered stretch occupies residues 595–623 (AENMYKKDEPNTANDKKKKDDDVIDAEVE).

Belongs to the heat shock protein 70 family.

Functionally, acts as a chaperone. In Campylobacter jejuni subsp. jejuni serotype O:6 (strain 81116 / NCTC 11828), this protein is Chaperone protein DnaK.